The primary structure comprises 516 residues: MALSQSVPFSATELLLASAIFCLVFWVLKGLRPRVPKGLKSPPEPWGWPLLGHVLTLGKNPHLALSRMSQRYGDVLQIRIGSTPVLVLSRLDTIRQALVRQGDDFKGRPDLYTSTLITDGQSLTFSTDSGPVWAARRRLAQNALNTFSIASDPASSSSCYLEEHVSKEAKALISRLQELMAGPGHFDPYNQVVVSVANVIGAMCFGQHFPESSDEMLSLVKNTHEFVETASSGNPLDFFPILRYLPNPALQRFKAFNQRFLWFLQKTVQEHYQDFDKNSVRDITGALFKHSKKGPRASGNLIPQEKIVNLVNDIFGAGFDTVTTAISWSLMYLVTKPEIQRKIQKELDTVIGRERRPRLSDRPQLPYLEAFILETFRHSSFLPFTIPHSTTRDTTLNGFYIPKKCCVFVNQWQVNHDPELWEDPSEFRPERFLTADGTAINKPLSEKMMLFGMGKRRCIGEVLAKWEIFLFLAILLQQLEFSVPPGVKVDLTPIYGLTMKHARCEHVQARLRFSIN.

Ser-69 is a glycosylation site (O-linked (GlcNAc) serine). Phe-226 contacts substrate. Cys-458 lines the heme pocket.

Belongs to the cytochrome P450 family. Interacts with PGRMC1; the interaction requires PGRMC1 homodimerization. Heme is required as a cofactor. As to expression, liver.

The protein resides in the endoplasmic reticulum membrane. It is found in the microsome membrane. It carries out the reaction an organic molecule + reduced [NADPH--hemoprotein reductase] + O2 = an alcohol + oxidized [NADPH--hemoprotein reductase] + H2O + H(+). It catalyses the reaction 17beta-estradiol + reduced [NADPH--hemoprotein reductase] + O2 = 2-hydroxy-17beta-estradiol + oxidized [NADPH--hemoprotein reductase] + H2O + H(+). The enzyme catalyses 17beta-estradiol + reduced [NADPH--hemoprotein reductase] + O2 = 4-hydroxy-17beta-estradiol + oxidized [NADPH--hemoprotein reductase] + H2O + H(+). The catalysed reaction is estrone + reduced [NADPH--hemoprotein reductase] + O2 = 2-hydroxyestrone + oxidized [NADPH--hemoprotein reductase] + H2O + H(+). It carries out the reaction estrone + reduced [NADPH--hemoprotein reductase] + O2 = 4-hydroxyestrone + oxidized [NADPH--hemoprotein reductase] + H2O + H(+). It catalyses the reaction cholesterol + reduced [NADPH--hemoprotein reductase] + O2 = 25-hydroxycholesterol + oxidized [NADPH--hemoprotein reductase] + H2O + H(+). The enzyme catalyses all-trans-retinol + reduced [NADPH--hemoprotein reductase] + O2 = all-trans-retinal + oxidized [NADPH--hemoprotein reductase] + 2 H2O + H(+). The catalysed reaction is all-trans-retinal + reduced [NADPH--hemoprotein reductase] + O2 = all-trans-retinoate + oxidized [NADPH--hemoprotein reductase] + H2O + 2 H(+). It carries out the reaction (5Z,8Z,11Z,14Z)-eicosatetraenoate + reduced [NADPH--hemoprotein reductase] + O2 = (14R,15S)-epoxy-(5Z,8Z,11Z)-eicosatrienoate + oxidized [NADPH--hemoprotein reductase] + H2O + H(+). It catalyses the reaction (5Z,8Z,11Z,14Z)-eicosatetraenoate + reduced [NADPH--hemoprotein reductase] + O2 = (14S,15R)-epoxy-(5Z,8Z,11Z)-eicosatrienoate + oxidized [NADPH--hemoprotein reductase] + H2O + H(+). The enzyme catalyses (5Z,8Z,11Z,14Z,17Z)-eicosapentaenoate + reduced [NADPH--hemoprotein reductase] + O2 = (17R,18S)-epoxy-(5Z,8Z,11Z,14Z)-eicosatetraenoate + oxidized [NADPH--hemoprotein reductase] + H2O + H(+). The catalysed reaction is (4Z,7Z,10Z,13Z,16Z,19Z)-docosahexaenoate + reduced [NADPH--hemoprotein reductase] + O2 = (19R,20S)-epoxy-(4Z,7Z,10Z,13Z,16Z)-docosapentaenoate + oxidized [NADPH--hemoprotein reductase] + H2O + H(+). It carries out the reaction (5S)-hydroperoxy-(6E,8Z,11Z,14Z)-eicosatetraenoate = 5-oxo-(6E,8Z,11Z,14Z)-eicosatetraenoate + H2O. It catalyses the reaction (12S)-hydroperoxy-(5Z,8Z,10E,14Z)-eicosatetraenoate = 12-oxo-(5Z,8Z,10E,14Z)-eicosatetraenoate + H2O. The enzyme catalyses (15S)-hydroperoxy-(5Z,8Z,11Z,13E)-eicosatetraenoate = 15-oxo-(5Z,8Z,11Z,13E)-eicosatetraenoate + H2O. The catalysed reaction is (13S)-hydroperoxy-(9Z,11E)-octadecadienoate = 13-oxo-(9Z,11E)-octadecadienoate + H2O. It carries out the reaction (5Z,8Z,11Z,14Z)-eicosatetraenoate + reduced [NADPH--hemoprotein reductase] + O2 = 13-hydroxy-(5Z,8Z,11Z,14Z)-eicosatetraenoate + oxidized [NADPH--hemoprotein reductase] + H2O + H(+). It catalyses the reaction (5Z,8Z,11Z,14Z)-eicosatetraenoate + reduced [NADPH--hemoprotein reductase] + O2 = 19-hydroxy-(5Z,8Z,11Z,14Z)-eicosatetraenoate + oxidized [NADPH--hemoprotein reductase] + H2O + H(+). The enzyme catalyses (9Z,12Z)-octadecadienoate + reduced [NADPH--hemoprotein reductase] + O2 = 11-hydroxy-(9Z,12Z)-octadecadienoate + oxidized [NADPH--hemoprotein reductase] + H2O + H(+). Its pathway is cofactor metabolism; retinol metabolism. The protein operates within steroid metabolism; cholesterol metabolism. It functions in the pathway lipid metabolism; arachidonate metabolism. A cytochrome P450 monooxygenase involved in the metabolism of various endogenous substrates, including fatty acids, steroid hormones and vitamins. Mechanistically, uses molecular oxygen inserting one oxygen atom into a substrate, and reducing the second into a water molecule, with two electrons provided by NADPH via cytochrome P450 reductase (NADPH--hemoprotein reductase). Catalyzes the hydroxylation of carbon-hydrogen bonds. Exhibits high catalytic activity for the formation of hydroxyestrogens from estrone (E1) and 17beta-estradiol (E2), namely 2-hydroxy E1 and E2. Metabolizes cholesterol toward 25-hydroxycholesterol, a physiological regulator of cellular cholesterol homeostasis. May act as a major enzyme for all-trans retinoic acid biosynthesis in the liver. Catalyzes two successive oxidative transformation of all-trans retinol to all-trans retinal and then to the active form all-trans retinoic acid. Primarily catalyzes stereoselective epoxidation of the last double bond of polyunsaturated fatty acids (PUFA), displaying a strong preference for the (R,S) stereoisomer. Catalyzes bisallylic hydroxylation and omega-1 hydroxylation of PUFA. May also participate in eicosanoids metabolism by converting hydroperoxide species into oxo metabolites (lipoxygenase-like reaction, NADPH-independent). Plays a role in the oxidative metabolism of xenobiotics. Catalyzes the N-hydroxylation of heterocyclic amines and the O-deethylation of phenacetin. Metabolizes caffeine via N3-demethylation. The protein is Cytochrome P450 1A2 of Homo sapiens (Human).